The following is a 287-amino-acid chain: Thymidylate synthase (287 aa).

Residue arginine 21 participates in dUMP binding. Histidine 51 is a binding site for (6R)-5,10-methylene-5,6,7,8-tetrahydrofolate. 150–151 contributes to the dUMP binding site; it reads RR. The Nucleophile role is filled by cysteine 170. DUMP is bound by residues 190 to 193, asparagine 201, and 231 to 233; these read RSGD and HIY. Aspartate 193 lines the (6R)-5,10-methylene-5,6,7,8-tetrahydrofolate pocket. (6R)-5,10-methylene-5,6,7,8-tetrahydrofolate is bound at residue alanine 286.

The protein belongs to the thymidylate synthase family. Bacterial-type ThyA subfamily. In terms of assembly, homodimer.

Its subcellular location is the cytoplasm. The catalysed reaction is dUMP + (6R)-5,10-methylene-5,6,7,8-tetrahydrofolate = 7,8-dihydrofolate + dTMP. It functions in the pathway pyrimidine metabolism; dTTP biosynthesis. In terms of biological role, catalyzes the reductive methylation of 2'-deoxyuridine-5'-monophosphate (dUMP) to 2'-deoxythymidine-5'-monophosphate (dTMP) while utilizing 5,10-methylenetetrahydrofolate (mTHF) as the methyl donor and reductant in the reaction, yielding dihydrofolate (DHF) as a by-product. This enzymatic reaction provides an intracellular de novo source of dTMP, an essential precursor for DNA biosynthesis. This Mycoplasma pneumoniae (strain ATCC 29342 / M129 / Subtype 1) (Mycoplasmoides pneumoniae) protein is Thymidylate synthase.